The primary structure comprises 142 residues: MIRHGSNKLKIFILSILLLTLSGCALKSSSNSEKEWHIVPVSKDYFSIPNDLLWSFNTTNKSINVYSKCISGKAVYSFNAGKFMGNFNVKEVDGCFMDAQKIAIDKLFSMLKDGVVLKGNKINDTILIEKDGEVKLKLIRGI.

Positions 1–23 (MIRHGSNKLKIFILSILLLTLSG) are cleaved as a signal peptide. Cys-24 carries the N-palmitoyl cysteine lipid modification. Cys-24 carries the S-diacylglycerol cysteine lipid modification.

It belongs to the MxiM family. As to quaternary structure, monomer. Interacts with the secretin MxiD/SctC.

It is found in the cell outer membrane. Functionally, involved in the synthesis of the type III secretion system (T3SS), also called injectisome, which is used to inject bacterial effector proteins into eukaryotic host cells. Pilot protein that is required for the proper localization of the secretin MxiD/SctC in the outer membrane. Also influences both MxiD/SctC multimerization and stability. Required for both Ipa translocation and tissue culture cell invasion. Binds lipids. The sequence is that of Type 3 secretion system pilotin from Shigella flexneri.